The following is a 1770-amino-acid chain: Transposon Ty2-LR1 Gag-Pol polyprotein (1770 aa).

3 stretches are compositionally biased toward polar residues: residues 1-11 (MESQQLHQNPH), 19-39 (ASVTSKEVPSNQDPLAVSASN), and 49-60 (KVNSQQETTPGT). 2 disordered regions span residues 1–86 (MESQ…GQYQ) and 359–453 (QHSE…LPDH). The interval 295–397 (ENNINVSDRL…SSKPRAAKAH (103 aa)) is RNA-binding. The segment covering 369-381 (TSPNTTNTKVTTR) has biased composition (low complexity). Polar residues-rich tracts occupy residues 399–408 (IATSSKFSRV) and 415–435 (ESTVSSQYLSDDNELSLGQQQ). Residue aspartate 457 is the For protease activity; shared with dimeric partner of the active site. The tract at residues 579 to 636 (NVNKSKSVNKYPYPLIHRMLGHANFRSIQKSLKKNAVTYLKESDIEWSNASTYQCPDC) is integrase-type zinc finger-like. The Integrase catalytic domain maps to 656–831 (ESYEPFQYLH…AGLDITTILP (176 aa)). Mg(2+) is bound by residues aspartate 667 and aspartate 732. Disordered regions lie at residues 1005 to 1038 (GGTIESDTTSPRHSSTFTARNQKRPGSPNDMIDL), 1058 to 1135 (GTEE…KSSK), 1146 to 1165 (LPLPDLTHKSPTDTSDVSKD), and 1170 to 1205 (HSRQTNSSLGGMDDSNVLTTTKSKKRSLEDNETEIE). Composition is skewed to polar residues over residues 1009–1024 (ESDTTSPRHSSTFTAR) and 1065–1082 (QRNSDTNIKYRTTNSTPS). Positions 1151 to 1165 (LTHKSPTDTSDVSKD) are enriched in basic and acidic residues. The short motif at 1193 to 1227 (KKRSLEDNETEIEVSRDTWNNKNMRSLEPPRSKKR) is the Bipartite nuclear localization signal element. Residues 1353-1491 (NDYYITQLDI…DILGLEIKYQ (139 aa)) enclose the Reverse transcriptase Ty1/copia-type domain. Residues aspartate 1361, aspartate 1442, aspartate 1443, aspartate 1625, glutamate 1667, and aspartate 1700 each contribute to the Mg(2+) site. The RNase H Ty1/copia-type domain occupies 1625–1767 (DASYGNQPYY…IKTFKLLTNK (143 aa)).

In terms of assembly, the capsid protein forms a homotrimer, from which the VLPs are assembled. The protease is a homodimer, whose active site consists of two apposed aspartic acid residues. Post-translationally, initially, virus-like particles (VLPs) are composed of the structural unprocessed proteins Gag and Gag-Pol, and also contain the host initiator methionine tRNA (tRNA(i)-Met) which serves as a primer for minus-strand DNA synthesis, and a dimer of genomic Ty RNA. Processing of the polyproteins occurs within the particle and proceeds by an ordered pathway, called maturation. First, the protease (PR) is released by autocatalytic cleavage of the Gag-Pol polyprotein, and this cleavage is a prerequisite for subsequent processing at the remaining sites to release the mature structural and catalytic proteins. Maturation takes place prior to the RT reaction and is required to produce transposition-competent VLPs.

It is found in the cytoplasm. It localises to the nucleus. It catalyses the reaction DNA(n) + a 2'-deoxyribonucleoside 5'-triphosphate = DNA(n+1) + diphosphate. It carries out the reaction Endonucleolytic cleavage to 5'-phosphomonoester.. Functionally, capsid protein (CA) is the structural component of the virus-like particle (VLP), forming the shell that encapsulates the retrotransposons dimeric RNA genome. The particles are assembled from trimer-clustered units and there are holes in the capsid shells that allow for the diffusion of macromolecules. CA also has nucleocapsid-like chaperone activity, promoting primer tRNA(i)-Met annealing to the multipartite primer-binding site (PBS), dimerization of Ty2 RNA and initiation of reverse transcription. The aspartyl protease (PR) mediates the proteolytic cleavages of the Gag and Gag-Pol polyproteins after assembly of the VLP. In terms of biological role, reverse transcriptase/ribonuclease H (RT) is a multifunctional enzyme that catalyzes the conversion of the retro-elements RNA genome into dsDNA within the VLP. The enzyme displays a DNA polymerase activity that can copy either DNA or RNA templates, and a ribonuclease H (RNase H) activity that cleaves the RNA strand of RNA-DNA heteroduplexes during plus-strand synthesis and hydrolyzes RNA primers. The conversion leads to a linear dsDNA copy of the retrotransposon that includes long terminal repeats (LTRs) at both ends. Its function is as follows. Integrase (IN) targets the VLP to the nucleus, where a subparticle preintegration complex (PIC) containing at least integrase and the newly synthesized dsDNA copy of the retrotransposon must transit the nuclear membrane. Once in the nucleus, integrase performs the integration of the dsDNA into the host genome. This chain is Transposon Ty2-LR1 Gag-Pol polyprotein (TY2B-LR1), found in Saccharomyces cerevisiae (strain ATCC 204508 / S288c) (Baker's yeast).